A 208-amino-acid chain; its full sequence is MADILTQLQTCLDQLATQFYATIGYLVTYHDNSPAIPPQNDPTAAPALAKITKNSTAPPAPAGAPAGSQASPQQQSAQIPGQQQQGGGDAGQTPGAGGGTGGAGADPNLPPAPDSPRTFASRQRELARDLVIKEQQIEYLISVLPGIDSSEAEQERRIKELEKELRSAEEDREQRVRELRKLRKKLENVLGAVEVGIYGDRGAVASRR.

Residues 52-122 (TKNSTAPPAP…PDSPRTFASR (71 aa)) form a disordered region. Over residues 63 to 83 (GAPAGSQASPQQQSAQIPGQQ) the composition is skewed to low complexity. The span at 84-104 (QQGGGDAGQTPGAGGGTGGAG) shows a compositional bias: gly residues. A coiled-coil region spans residues 146 to 195 (GIDSSEAEQERRIKELEKELRSAEEDREQRVRELRKLRKKLENVLGAVEV).

This sequence belongs to the Mediator complex subunit 21 family. Component of the Mediator complex.

It is found in the nucleus. In terms of biological role, component of the Mediator complex, a coactivator involved in the regulated transcription of nearly all RNA polymerase II-dependent genes. Mediator functions as a bridge to convey information from gene-specific regulatory proteins to the basal RNA polymerase II transcription machinery. Mediator is recruited to promoters by direct interactions with regulatory proteins and serves as a scaffold for the assembly of a functional preinitiation complex with RNA polymerase II and the general transcription factors. The protein is Mediator of RNA polymerase II transcription subunit 21 (srb7) of Aspergillus oryzae (strain ATCC 42149 / RIB 40) (Yellow koji mold).